We begin with the raw amino-acid sequence, 347 residues long: Rhodopsin (347 aa).

The Extracellular portion of the chain corresponds to 1–33; it reads TEGPDFYIPMVNTTGVVRSPYEYPQYYLVNPAA. Asparagine 12 carries N-linked (GlcNAc...) asparagine glycosylation. The chain crosses the membrane as a helical span at residues 34–58; it reads FAVLGAYMFFLIIIGFPINFLTLYV. Topologically, residues 59–70 are cytoplasmic; it reads TLEHKKLRTPLN. The chain crosses the membrane as a helical span at residues 71–93; it reads YILLNLAVADLFMVIGGFTTTMY. Residues 94–107 lie on the Extracellular side of the membrane; the sequence is SSMHGYFVLGRLGC. Cysteines 107 and 184 form a disulfide. Residues 108–130 form a helical membrane-spanning segment; that stretch reads NIEGFFATLGGMISLWSLAVLAI. The 'Ionic lock' involved in activated form stabilization motif lies at 131 to 133; sequence ERW. Residues 131 to 149 lie on the Cytoplasmic side of the membrane; it reads ERWVVVCKPISNFRFGENH. Residues 150-170 traverse the membrane as a helical segment; it reads AIMGVSLTWVMALACTVPPLV. At 171-199 the chain is on the extracellular side; sequence GWSRYIPEGMQCACGIDYYTRAEGYNNES. N-linked (GlcNAc...) asparagine glycosylation is present at asparagine 197. Residues 200–221 traverse the membrane as a helical segment; that stretch reads FVIYMFTFHFLFPMFIIFFCYG. The Cytoplasmic portion of the chain corresponds to 222–249; sequence RLLCAVKEAAAAQQESETTQRAEREVTR. The chain crosses the membrane as a helical span at residues 250–271; it reads MVILMVIGYLVCWLPYASVAWF. Residues 272-283 are Extracellular-facing; that stretch reads IFTHKGSEFGPL. The chain crosses the membrane as a helical span at residues 284 to 305; it reads FMAVPSFFAKSSSIYNPIIYIC. An N6-(retinylidene)lysine modification is found at lysine 293. At 306–347 the chain is on the cytoplasmic side; sequence MNKQFRQCMITTLFCGKNPFEGQEEDSSTKTEASSASSVSPA. A lipid anchor (S-palmitoyl cysteine) is attached at cysteine 320. The interval 326–347 is disordered; the sequence is EGQEEDSSTKTEASSASSVSPA. Residues 335-347 are compositionally biased toward low complexity; that stretch reads KTEASSASSVSPA.

It belongs to the G-protein coupled receptor 1 family. Opsin subfamily. In terms of processing, phosphorylated on some or all of the serine and threonine residues present in the C-terminal region. Contains one covalently linked retinal chromophore.

The protein localises to the membrane. The protein resides in the cell projection. It is found in the cilium. Its subcellular location is the photoreceptor outer segment. Photoreceptor required for image-forming vision at low light intensity. While most salt water fish species use retinal as chromophore, most freshwater fish use 3-dehydroretinal, or a mixture of retinal and 3-dehydroretinal. Light-induced isomerization of 11-cis to all-trans retinal triggers a conformational change that activates signaling via G-proteins. Subsequent receptor phosphorylation mediates displacement of the bound G-protein alpha subunit by arrestin and terminates signaling. This chain is Rhodopsin (rho), found in Sargocentron tiere (Blue lined squirrelfish).